The primary structure comprises 342 residues: Aquaporin-7 (342 aa).

Over 1-36 (MVQTSRHRRSTRGSKMVSWSVMAKIQEILQKKMVRE) the chain is Cytoplasmic. Ser-20 is subject to Phosphoserine. A helical membrane pass occupies residues 37 to 54 (FLAEFMSTYVMMVFGLGS). Over 55 to 67 (VAHMVLNKKYGSY) the chain is Extracellular. The helical transmembrane segment at 68-85 (LGVNLGFGFGVTMGVHVA) threads the bilayer. Over 86-89 (GHIS) the chain is Cytoplasmic. Positions 90–103 (GAHMNAAVTFANCA) form an intramembrane region, discontinuously helical. Positions 94 to 96 (NAA) match the NPA 1 motif. Topologically, residues 104–111 (LGRVPWRK) are cytoplasmic. A helical membrane pass occupies residues 112-132 (FPVYVLGQFLGSFLAAATIYT). The Extracellular portion of the chain corresponds to 133–167 (LFYTAILHFSGGQLMVTGPVATAGIFATYLPDHMT). A helical transmembrane segment spans residues 168 to 188 (LWRGFLNEAWLTGMLQLCLFA). Residues 189-200 (ITDQENNAALPG) are Cytoplasmic-facing. Residues 201 to 217 (TQALVIGILVVIIGVSL) traverse the membrane as a helical segment. At 218–221 (GMNT) the chain is on the extracellular side. Residues 222–235 (GYAINPSRDLPPRV) constitute an intramembrane region (discontinuously helical). Residues 226–228 (NPS) carry the NPA 2 motif. Residues 236–253 (FTFIAGWGKEVFSEGENW) lie on the Extracellular side of the membrane. Residues 254–275 (WWVPVVAPLLGACLGGIIYLVF) form a helical membrane-spanning segment. The Cytoplasmic segment spans residues 276 to 342 (IGSTTPREPL…LHESMALGHF (67 aa)).

The protein belongs to the MIP/aquaporin (TC 1.A.8) family. Homotetramer; each monomer provides an independent glycerol/water pore. Two homotetramers on opposing membranes can dimerize, forming a cell-cell junction. Interacts with PLIN1. Phosphorylation by PKA could prevent the interaction with PLIN1.

The protein localises to the cell membrane. Its subcellular location is the cytoplasmic vesicle membrane. It localises to the lipid droplet. It carries out the reaction glycerol(in) = glycerol(out). The enzyme catalyses H2O(in) = H2O(out). It catalyses the reaction urea(in) = urea(out). Its activity is regulated as follows. Glycerol transport is regulated by pH, with the porin being permeable to glycerol at pH 7.4 but not at pH 5.5. Water permeability, however, is not influenced by pH. Its function is as follows. Aquaglyceroporins form homotetrameric transmembrane channels, with each monomer independently mediating glycerol and water transport across the plasma membrane along their osmotic gradient. Could also be permeable to urea. Mediates the efflux of glycerol, formed upon triglyceride hydrolysis, to avoid its accumulation in adipocytes and to make it available to other tissues. In the kidney, mediates the reabsorption of glycerol, preventing its loss in urine, again participating to energy homeostasis. In pancreatic beta cells, it also mediates the efflux of glycerol, regulating its intracellular levels. The chain is Aquaporin-7 (AQP7) from Macaca fascicularis (Crab-eating macaque).